We begin with the raw amino-acid sequence, 187 residues long: UPF0301 protein YqgE (187 aa).

Belongs to the UPF0301 (AlgH) family.

The sequence is that of UPF0301 protein YqgE from Salmonella choleraesuis (strain SC-B67).